The chain runs to 60 residues: Large ribosomal subunit protein bL32 (60 aa).

The protein belongs to the bacterial ribosomal protein bL32 family.

The chain is Large ribosomal subunit protein bL32 from Azotobacter vinelandii (strain DJ / ATCC BAA-1303).